We begin with the raw amino-acid sequence, 160 residues long: Globin CTT-Y (160 aa).

A signal peptide spans 1 to 16 (MKVLAIFALCIIGALA). One can recognise a Globin domain in the interval 17-160 (TPCDDFKIMQ…IRKVINANLE (144 aa)). The heme b site is built by His74 and His109.

The protein belongs to the globin family.

This is Globin CTT-Y (CTT-Y) from Chironomus thummi piger (Midge).